A 76-amino-acid chain; its full sequence is Peptide ARACIN 1 (76 aa).

An N-terminal signal peptide occupies residues 1–22; that stretch reads MAMKTSHVLLLCLMFVIGFVEA. Positions 23–35 are cleaved as a propeptide — removed in mature form; it reads RRSDTGPDISTPP. A SxS motif essential for MIK2 binding motif is present at residues 36–38; the sequence is SGS. The SCOOP motif signature appears at 36–49; the sequence is SGSCGASIAEFNSS. The interval 56–76 is disordered; it reads APPCRRPRLQNSEDVTHTTLP. Residues 64 to 76 are compositionally biased toward polar residues; that stretch reads LQNSEDVTHTTLP.

The protein belongs to the serine rich endogenous peptide (SCOOP) phytocytokine family. In terms of assembly, interacts with MIK2 (via extracellular leucine-rich repeat domain); this interaction triggers the formation of complex between MIK2 and the BAK1/SERK3 and SERK4 coreceptors, and subsequent BAK1 activation by phosphorylation. As to expression, mainly expressed in young developing leaves, hydathodes, immature flowers and elongating pollen tubes.

The protein localises to the cell membrane. It is found in the secreted. It localises to the extracellular space. The protein resides in the apoplast. Its subcellular location is the endoplasmic reticulum. Functionally, brassicaceae-specific phytocytokine (plant endogenous peptide released into the apoplast) perceived by MIK2 in a BAK1/SERK3 and SERK4 coreceptors-dependent manner, that modulates various physiological and antimicrobial processes including growth prevention and reactive oxygen species (ROS) response regulation. Inhibits the fungal growth of Alternaria brassicicola, Sclerotinia sclerotiorum, Fusarium graminearum, yeast (Saccharomyces) and Botrytis cinerea, thus being an antimicrobial peptide (AMP). Promotes resistance to A.brassicicola and B.cinerea. This Arabidopsis thaliana (Mouse-ear cress) protein is Peptide ARACIN 1.